The primary structure comprises 155 residues: 6,7-dimethyl-8-ribityllumazine synthase (155 aa).

5-amino-6-(D-ribitylamino)uracil-binding positions include tryptophan 24, 58–60 (AFE), and 82–84 (AVI). A (2S)-2-hydroxy-3-oxobutyl phosphate-binding site is contributed by 87-88 (GT). Histidine 90 serves as the catalytic Proton donor. A 5-amino-6-(D-ribitylamino)uracil-binding site is contributed by phenylalanine 115. Arginine 129 contacts (2S)-2-hydroxy-3-oxobutyl phosphate.

This sequence belongs to the DMRL synthase family. In terms of assembly, forms an icosahedral capsid composed of 60 subunits, arranged as a dodecamer of pentamers.

The enzyme catalyses (2S)-2-hydroxy-3-oxobutyl phosphate + 5-amino-6-(D-ribitylamino)uracil = 6,7-dimethyl-8-(1-D-ribityl)lumazine + phosphate + 2 H2O + H(+). Its pathway is cofactor biosynthesis; riboflavin biosynthesis; riboflavin from 2-hydroxy-3-oxobutyl phosphate and 5-amino-6-(D-ribitylamino)uracil: step 1/2. Functionally, catalyzes the formation of 6,7-dimethyl-8-ribityllumazine by condensation of 5-amino-6-(D-ribitylamino)uracil with 3,4-dihydroxy-2-butanone 4-phosphate. This is the penultimate step in the biosynthesis of riboflavin. The chain is 6,7-dimethyl-8-ribityllumazine synthase from Saccharophagus degradans (strain 2-40 / ATCC 43961 / DSM 17024).